The primary structure comprises 186 residues: Lipid A palmitoyltransferase PagP (186 aa).

The first 25 residues, 1–25, serve as a signal peptide directing secretion; sequence MNVSKYVAIFFFVFIQLISVGKVFA. Catalysis depends on residues His-58, Asp-101, and Ser-102.

It belongs to the lipid A palmitoyltransferase family. Homodimer.

It localises to the cell outer membrane. The catalysed reaction is lipid A (E. coli) + a 1-hexadecanoyl-2-acyl-sn-glycero-3-phosphocholine = hepta-acyl lipid A (E. coli) + a 2-acyl-sn-glycero-3-phosphocholine. It catalyses the reaction lipid IIA + a 1-hexadecanoyl-2-acyl-sn-glycero-3-phosphocholine = lipid IIB + a 2-acyl-sn-glycero-3-phosphocholine. The enzyme catalyses lipid IVA (E. coli) + a 1-hexadecanoyl-2-acyl-sn-glycero-3-phosphocholine = lipid IVB (E. coli) + a 2-acyl-sn-glycero-3-phosphocholine. Functionally, transfers a palmitate residue from the sn-1 position of a phospholipid to the N-linked hydroxymyristate on the proximal unit of lipid A or its precursors. This is Lipid A palmitoyltransferase PagP from Escherichia coli O6:H1 (strain CFT073 / ATCC 700928 / UPEC).